The chain runs to 688 residues: Elongation factor G (688 aa).

Residues 8–282 form the tr-type G domain; that stretch reads EKTRNIGIIA…AIVDYLPAPC (275 aa). GTP-binding positions include 17–24, 81–85, and 135–138; these read AHIDAGKT, DTPGH, and NKMD.

Belongs to the TRAFAC class translation factor GTPase superfamily. Classic translation factor GTPase family. EF-G/EF-2 subfamily.

The protein localises to the cytoplasm. Functionally, catalyzes the GTP-dependent ribosomal translocation step during translation elongation. During this step, the ribosome changes from the pre-translocational (PRE) to the post-translocational (POST) state as the newly formed A-site-bound peptidyl-tRNA and P-site-bound deacylated tRNA move to the P and E sites, respectively. Catalyzes the coordinated movement of the two tRNA molecules, the mRNA and conformational changes in the ribosome. This chain is Elongation factor G, found in Onion yellows phytoplasma (strain OY-M).